The primary structure comprises 453 residues: Gamma-aminobutyric acid receptor subunit alpha-6 (453 aa).

Positions 1 to 19 are cleaved as a signal peptide; sequence MASSLPWLCIILWLENALG. Residues 20-243 lie on the Extracellular side of the membrane; the sequence is KLEVEGNFYS…FHLQRKMGYF (224 aa). N-linked (GlcNAc...) asparagine glycosylation occurs at Asn-31. Residue Arg-84 coordinates 4-aminobutanoate. N-linked (GlcNAc...) asparagine glycans are attached at residues Asn-128 and Asn-141. A 4-aminobutanoate-binding site is contributed by Thr-147. A disulfide bridge connects residues Cys-156 and Cys-170. Residues 244–264 form a helical membrane-spanning segment; the sequence is MIQIYTPCIMTVILSQVSFWI. Topologically, residues 265–270 are cytoplasmic; it reads NKESVP. Residues 271–290 traverse the membrane as a helical segment; the sequence is ARTVFGITTVLTMTTLSISA. The Extracellular portion of the chain corresponds to 291–304; that stretch reads RHSLPKVSYATAMD. A helical membrane pass occupies residues 305-325; that stretch reads WFIAVCFAFVFSALIEFAAVN. At 326 to 422 the chain is on the cytoplasmic side; it reads YFTNLQTQKA…GTSKIDQYSR (97 aa). At Thr-403 the chain carries Phosphothreonine. Residues 423–443 form a helical membrane-spanning segment; it reads ILFPVAFAGFNLVYWVVYLSK. At 444–453 the chain is on the extracellular side; it reads DTMEVSSSVE.

Belongs to the ligand-gated ion channel (TC 1.A.9) family. Gamma-aminobutyric acid receptor (TC 1.A.9.5) subfamily. GABRA6 sub-subfamily. As to quaternary structure, heteropentamer, formed by a combination of alpha (GABRA1-6), beta (GABRB1-3), gamma (GABRG1-3), delta (GABRD), epsilon (GABRE), rho (GABRR1-3), pi (GABRP) and theta (GABRQ) chains, each subunit exhibiting distinct physiological and pharmacological properties. Binds UBQLN1. In terms of tissue distribution, expressed in brain, in cerebellar granule cells.

It is found in the postsynaptic cell membrane. The protein resides in the cell membrane. It carries out the reaction chloride(in) = chloride(out). Its function is as follows. Alpha subunit of the heteropentameric ligand-gated chloride channel gated by gamma-aminobutyric acid (GABA), a major inhibitory neurotransmitter in the brain. GABA-gated chloride channels, also named GABA(A) receptors (GABAAR), consist of five subunits arranged around a central pore and contain GABA active binding site(s) located at the alpha and beta subunit interface(s). When activated by GABA, GABAARs selectively allow the flow of chloride anions across the cell membrane down their electrochemical gradient. Alpha-6/GABRA6 subunits are found at both synaptic and extrasynaptic sites. Chloride influx into the postsynaptic neuron following GABAAR opening decreases the neuron ability to generate a new action potential, thereby reducing nerve transmission. Extrasynaptic alpha-6-containing receptors contribute to the tonic GABAergic inhibition. Alpha-6 subunits are also present on glutamatergic synapses. This Homo sapiens (Human) protein is Gamma-aminobutyric acid receptor subunit alpha-6.